The primary structure comprises 253 residues: Phosphoadenosine 5'-phosphosulfate reductase (253 aa).

The active-site Nucleophile; cysteine thiosulfonate intermediate is Cys239.

It belongs to the PAPS reductase family. CysH subfamily.

The protein localises to the cytoplasm. It carries out the reaction [thioredoxin]-disulfide + sulfite + adenosine 3',5'-bisphosphate + 2 H(+) = [thioredoxin]-dithiol + 3'-phosphoadenylyl sulfate. The protein operates within sulfur metabolism; hydrogen sulfide biosynthesis; sulfite from sulfate: step 3/3. Catalyzes the formation of sulfite from phosphoadenosine 5'-phosphosulfate (PAPS) using thioredoxin as an electron donor. In Aliivibrio salmonicida (strain LFI1238) (Vibrio salmonicida (strain LFI1238)), this protein is Phosphoadenosine 5'-phosphosulfate reductase.